A 411-amino-acid polypeptide reads, in one-letter code: Methylthioribose-1-phosphate isomerase (411 aa).

The active-site Proton donor is aspartate 284.

This sequence belongs to the eIF-2B alpha/beta/delta subunits family. MtnA subfamily.

The protein resides in the cytoplasm. Its subcellular location is the nucleus. The catalysed reaction is 5-(methylsulfanyl)-alpha-D-ribose 1-phosphate = 5-(methylsulfanyl)-D-ribulose 1-phosphate. It functions in the pathway amino-acid biosynthesis; L-methionine biosynthesis via salvage pathway; L-methionine from S-methyl-5-thio-alpha-D-ribose 1-phosphate: step 1/6. Its function is as follows. Catalyzes the interconversion of methylthioribose-1-phosphate (MTR-1-P) into methylthioribulose-1-phosphate (MTRu-1-P). This chain is Methylthioribose-1-phosphate isomerase, found in Komagataella phaffii (strain GS115 / ATCC 20864) (Yeast).